We begin with the raw amino-acid sequence, 25 residues long: Kunitz-type serine protease inhibitor 2 (25 aa).

One can recognise a BPTI/Kunitz inhibitor domain in the interval 6 to 25 (VCELPKEVGGPCRGHIIPRY).

It localises to the secreted. Inhibits bovine trypsin, human plasma kallikrein and human neutrophil elastase. The sequence is that of Kunitz-type serine protease inhibitor 2 from Rhipicephalus microplus (Cattle tick).